The primary structure comprises 276 residues: Ribosomal RNA small subunit methyltransferase A (276 aa).

S-adenosyl-L-methionine contacts are provided by Asn27, Leu29, Gly54, Glu75, Asp101, and Asn123.

Belongs to the class I-like SAM-binding methyltransferase superfamily. rRNA adenine N(6)-methyltransferase family. RsmA subfamily.

Its subcellular location is the cytoplasm. It carries out the reaction adenosine(1518)/adenosine(1519) in 16S rRNA + 4 S-adenosyl-L-methionine = N(6)-dimethyladenosine(1518)/N(6)-dimethyladenosine(1519) in 16S rRNA + 4 S-adenosyl-L-homocysteine + 4 H(+). In terms of biological role, specifically dimethylates two adjacent adenosines (A1518 and A1519) in the loop of a conserved hairpin near the 3'-end of 16S rRNA in the 30S particle. May play a critical role in biogenesis of 30S subunits. The chain is Ribosomal RNA small subunit methyltransferase A from Bartonella henselae (strain ATCC 49882 / DSM 28221 / CCUG 30454 / Houston 1) (Rochalimaea henselae).